Consider the following 379-residue polypeptide: Succinyl-diaminopimelate desuccinylase (379 aa).

His70 is a binding site for Zn(2+). Residue Asp72 is part of the active site. Asp103 lines the Zn(2+) pocket. Catalysis depends on Glu137, which acts as the Proton acceptor. Zn(2+) is bound by residues Glu138, Glu166, and His352.

Belongs to the peptidase M20A family. DapE subfamily. As to quaternary structure, homodimer. It depends on Zn(2+) as a cofactor. Co(2+) is required as a cofactor.

It carries out the reaction N-succinyl-(2S,6S)-2,6-diaminopimelate + H2O = (2S,6S)-2,6-diaminopimelate + succinate. The protein operates within amino-acid biosynthesis; L-lysine biosynthesis via DAP pathway; LL-2,6-diaminopimelate from (S)-tetrahydrodipicolinate (succinylase route): step 3/3. Catalyzes the hydrolysis of N-succinyl-L,L-diaminopimelic acid (SDAP), forming succinate and LL-2,6-diaminopimelate (DAP), an intermediate involved in the bacterial biosynthesis of lysine and meso-diaminopimelic acid, an essential component of bacterial cell walls. This Burkholderia pseudomallei (strain 1106a) protein is Succinyl-diaminopimelate desuccinylase.